The primary structure comprises 215 residues: Small ribosomal subunit protein eS1 (215 aa).

A disordered region spans residues Ser195–Asn215.

This sequence belongs to the eukaryotic ribosomal protein eS1 family.

This chain is Small ribosomal subunit protein eS1, found in Thermoplasma acidophilum (strain ATCC 25905 / DSM 1728 / JCM 9062 / NBRC 15155 / AMRC-C165).